A 125-amino-acid polypeptide reads, in one-letter code: Small ribosomal subunit protein uS12 (125 aa).

Aspartate 89 bears the 3-methylthioaspartic acid mark. The segment at 105–125 (AGVKDRKQARSKYGAKRPKAA) is disordered. Residues 113 to 125 (ARSKYGAKRPKAA) are compositionally biased toward basic residues.

It belongs to the universal ribosomal protein uS12 family. In terms of assembly, part of the 30S ribosomal subunit. Contacts proteins S8 and S17. May interact with IF1 in the 30S initiation complex.

Functionally, with S4 and S5 plays an important role in translational accuracy. Its function is as follows. Interacts with and stabilizes bases of the 16S rRNA that are involved in tRNA selection in the A site and with the mRNA backbone. Located at the interface of the 30S and 50S subunits, it traverses the body of the 30S subunit contacting proteins on the other side and probably holding the rRNA structure together. The combined cluster of proteins S8, S12 and S17 appears to hold together the shoulder and platform of the 30S subunit. The protein is Small ribosomal subunit protein uS12 of Methylobacillus flagellatus (strain ATCC 51484 / DSM 6875 / VKM B-1610 / KT).